The following is a 359-amino-acid chain: Glucose 1-dehydrogenase (359 aa).

Residue Cys39 participates in Zn(2+) binding. Thr41 contributes to the substrate binding site. 2 residues coordinate Zn(2+): His64 and Glu65. 2 residues coordinate substrate: Glu116 and Glu152. Zn(2+) is bound at residue Glu152. NADP(+) is bound at residue 183–186 (AGPI).

The protein belongs to the zinc-containing alcohol dehydrogenase family. Glucose 1-dehydrogenase subfamily. Zn(2+) serves as cofactor.

The catalysed reaction is D-glucose + NAD(+) = D-glucono-1,5-lactone + NADH + H(+). The enzyme catalyses D-glucose + NADP(+) = D-glucono-1,5-lactone + NADPH + H(+). Functionally, catalyzes the NAD(P)(+)-dependent oxidation of D-glucose to D-gluconate via gluconolactone. Can utilize both NAD(+) and NADP(+) as electron acceptor. Is involved in the degradation of glucose through a non-phosphorylative variant of the Entner-Doudoroff pathway. The polypeptide is Glucose 1-dehydrogenase (Methanocella arvoryzae (strain DSM 22066 / NBRC 105507 / MRE50)).